Reading from the N-terminus, the 168-residue chain is NADH-quinone oxidoreductase subunit B (168 aa).

[4Fe-4S] cluster contacts are provided by Cys-37, Cys-38, Cys-103, and Cys-132.

It belongs to the complex I 20 kDa subunit family. As to quaternary structure, NDH-1 is composed of 14 different subunits. Subunits NuoB, C, D, E, F, and G constitute the peripheral sector of the complex. [4Fe-4S] cluster serves as cofactor.

It is found in the cell inner membrane. The enzyme catalyses a quinone + NADH + 5 H(+)(in) = a quinol + NAD(+) + 4 H(+)(out). NDH-1 shuttles electrons from NADH, via FMN and iron-sulfur (Fe-S) centers, to quinones in the respiratory chain. The immediate electron acceptor for the enzyme in this species is believed to be ubiquinone. Couples the redox reaction to proton translocation (for every two electrons transferred, four hydrogen ions are translocated across the cytoplasmic membrane), and thus conserves the redox energy in a proton gradient. This chain is NADH-quinone oxidoreductase subunit B, found in Campylobacter fetus subsp. fetus (strain 82-40).